Here is a 457-residue protein sequence, read N- to C-terminus: MSAGKIVQIIGAVIDVEFPQDAVPKVYDALKVESGLTLEVQQQLGGGVVRCIALGTSDGLKRGLKVENTNNPIQVPVGTKTLGRIVNVLGEPIDEQGAIGEEERWAIHRSAPSYEEQSNSTELLETGIKVIDLICPFAKGGKVGLFGGAGVGKTVNMMELIRNIAIEHSGYSVFAGVGERTREGNDFYHEMKDSNVLDKVSLVYGQMNEPPGNRLRVALTGLTMAEKFRDEGRDVLFFVDNIYRYTLAGTEVSALLGRMPSAVGYQPTLAEEMGVLQERITSTKTGSITSVQAVYVPADDLTDPSPATTFAHLDSTVVLSRQIASLGIYPAVDPLDSTSRQLDPLVVGQEHYDVARGVQGILQRYKELKDIIAILGMDELSEEDKLVVARARKIERFLSQPFFVAEVFTGSPGKYVTLKDTIRGFKGILEGEYDHIPEQAFYMVGSIDEVLEKAKNM.

Residue Gly147–Thr154 coordinates ATP.

Belongs to the ATPase alpha/beta chains family. In terms of assembly, F-type ATPases have 2 components, CF(1) - the catalytic core - and CF(0) - the membrane proton channel. CF(1) has five subunits: alpha(3), beta(3), gamma(1), delta(1), epsilon(1). CF(0) has three main subunits: a(1), b(2) and c(9-12). The alpha and beta chains form an alternating ring which encloses part of the gamma chain. CF(1) is attached to CF(0) by a central stalk formed by the gamma and epsilon chains, while a peripheral stalk is formed by the delta and b chains.

The protein localises to the cell inner membrane. It catalyses the reaction ATP + H2O + 4 H(+)(in) = ADP + phosphate + 5 H(+)(out). Functionally, produces ATP from ADP in the presence of a proton gradient across the membrane. The catalytic sites are hosted primarily by the beta subunits. The sequence is that of ATP synthase subunit beta from Haemophilus influenzae (strain PittGG).